The following is a 363-amino-acid chain: Probable tRNA pseudouridine synthase D (363 aa).

The Nucleophile role is filled by aspartate 82. One can recognise a TRUD domain in the interval 151–363; sequence YLPAYIGYQR…IARTDPRLFT (213 aa).

It belongs to the pseudouridine synthase TruD family.

The enzyme catalyses uridine(13) in tRNA = pseudouridine(13) in tRNA. In terms of biological role, could be responsible for synthesis of pseudouridine from uracil-13 in transfer RNAs. The protein is Probable tRNA pseudouridine synthase D of Sulfurisphaera tokodaii (strain DSM 16993 / JCM 10545 / NBRC 100140 / 7) (Sulfolobus tokodaii).